We begin with the raw amino-acid sequence, 101 residues long: Small ribosomal subunit protein uS10 (101 aa).

It belongs to the universal ribosomal protein uS10 family. In terms of assembly, part of the 30S ribosomal subunit.

In terms of biological role, involved in the binding of tRNA to the ribosomes. The protein is Small ribosomal subunit protein uS10 of Methanocaldococcus jannaschii (strain ATCC 43067 / DSM 2661 / JAL-1 / JCM 10045 / NBRC 100440) (Methanococcus jannaschii).